Here is a 478-residue protein sequence, read N- to C-terminus: Zinc metalloproteinase/disintegrin (478 aa).

Residues 1–20 (MIQVLLVTICLAAFPYQGSS) form the signal peptide. A propeptide spanning residues 21–188 (IILESGNVND…PIKKVSQLNL (168 aa)) is cleaved from the precursor. The 198-residue stretch at 194–391 (RHVDIVVVVD…QNPQCILNKP (198 aa)) folds into the Peptidase M12B domain. Cys207 and Cys248 form a disulfide bridge. N-linked (GlcNAc...) (complex) asparagine glycosylation is present at Asn279. Cystine bridges form between Cys305–Cys386, Cys345–Cys370, and Cys347–Cys353. His330 is a Zn(2+) binding site. The active site involves Glu331. 2 residues coordinate Zn(2+): His334 and His340. The N-linked (GlcNAc...) (complex) asparagine glycan is linked to Asn369. A propeptide spanning residues 392 to 407 (LRTVSIPVSGNEHLEA) is cleaved from the precursor. The Disintegrin domain occupies 397-478 (IPVSGNEHLE…ADCPRYHSHA (82 aa)). 6 disulfides stabilise this stretch: Cys411-Cys426, Cys413-Cys421, Cys420-Cys443, Cys434-Cys440, Cys439-Cys464, and Cys452-Cys471. Positions 456–458 (RGD) match the Cell attachment site motif. Residues 476 to 478 (SHA) constitute a propeptide that is removed on maturation.

It belongs to the venom metalloproteinase (M12B) family. P-II subfamily. P-IIa sub-subfamily. In terms of assembly, monomeric (disintegrin). It depends on Zn(2+) as a cofactor. Post-translationally, glycans are composed of 4 GlcNAc, 3 Man, 2 Gal, 2 NeuAC and 1 Fuc residue. In terms of tissue distribution, expressed by the venom gland.

The protein localises to the secreted. Functionally, impairs hemostasis in the envenomed animal. Its function is as follows. Inhibits platelet aggregation induced by ADP, thrombin, platelet-activating factor and collagen. Acts by inhibiting fibrinogen interaction with platelet receptors alpha-IIb/beta-3 (ITGA2B/ITGB3). This chain is Zinc metalloproteinase/disintegrin, found in Calloselasma rhodostoma (Malayan pit viper).